Reading from the N-terminus, the 603-residue chain is Coiled-coil domain-containing protein 148 (603 aa).

2 coiled-coil regions span residues 365–429 (LAKD…KKKK) and 461–510 (EQSL…KQVA).

The sequence is that of Coiled-coil domain-containing protein 148 (CCDC148) from Macaca fascicularis (Crab-eating macaque).